The following is a 993-amino-acid chain: Chromosome transmission fidelity protein 18 (993 aa).

2 disordered regions span residues 1-52 (MPFI…DHDG) and 65-107 (FEIQ…DGLE). 2 stretches are compositionally biased toward acidic residues: residues 42–51 (LDDDDDDDHD) and 97–106 (DNDDDDDDGL). 321 to 328 (GPPGLGKT) is an ATP binding site. Positions 887–915 (RKNSENLSSTGSKKSTTKSDDIETPANPA) are disordered.

It belongs to the activator 1 small subunits family. CTF18 subfamily.

The protein resides in the nucleus. Its function is as follows. Essential for the fidelity of chromosome transmission. Required for the DNA replication block checkpoint. Replication factor C (RFC) complex has an essential but redundant activity in sister chromatid cohesion establishment. This chain is Chromosome transmission fidelity protein 18 (ctf18), found in Emericella nidulans (strain FGSC A4 / ATCC 38163 / CBS 112.46 / NRRL 194 / M139) (Aspergillus nidulans).